A 146-amino-acid chain; its full sequence is uncharacterized protein (146 aa).

One can recognise an N-acetyltransferase domain in the interval 7–146 (LQINYKTDEL…EGHDILIWNP (140 aa)).

This is an uncharacterized protein from Staphylococcus epidermidis (strain ATCC 35984 / DSM 28319 / BCRC 17069 / CCUG 31568 / BM 3577 / RP62A).